The following is a 432-amino-acid chain: Adenylosuccinate synthetase (432 aa).

Residues 13-19 (GDEGKGK) and 41-43 (GHT) contribute to the GTP site. Asp-14 acts as the Proton acceptor in catalysis. Mg(2+) contacts are provided by Asp-14 and Gly-41. IMP-binding positions include 14-17 (DEGK), 39-42 (NAGH), Thr-130, Arg-144, Gln-225, Thr-240, and Arg-304. His-42 serves as the catalytic Proton donor. Residue 300–306 (ATTGRRR) coordinates substrate. Residues Arg-306, 332-334 (KLD), and 414-416 (STG) contribute to the GTP site.

Belongs to the adenylosuccinate synthetase family. Homodimer. It depends on Mg(2+) as a cofactor.

It is found in the cytoplasm. The enzyme catalyses IMP + L-aspartate + GTP = N(6)-(1,2-dicarboxyethyl)-AMP + GDP + phosphate + 2 H(+). Its pathway is purine metabolism; AMP biosynthesis via de novo pathway; AMP from IMP: step 1/2. Its function is as follows. Plays an important role in the de novo pathway of purine nucleotide biosynthesis. Catalyzes the first committed step in the biosynthesis of AMP from IMP. This is Adenylosuccinate synthetase from Methylococcus capsulatus (strain ATCC 33009 / NCIMB 11132 / Bath).